Reading from the N-terminus, the 336-residue chain is NADH-quinone oxidoreductase subunit H (336 aa).

The next 8 helical transmembrane spans lie at 4–24 (YILW…LVVA), 75–95 (YLFF…WAVI), 108–128 (LGLL…VIAG), 154–174 (MGFA…TGII), 181–201 (IWHW…IAGI), 233–253 (LFFL…SIMF), 272–292 (FVPG…MFLW), and 308–328 (LGWK…ACMV).

The protein belongs to the complex I subunit 1 family. As to quaternary structure, NDH-1 is composed of 14 different subunits. Subunits NuoA, H, J, K, L, M, N constitute the membrane sector of the complex.

It is found in the cell inner membrane. It carries out the reaction a quinone + NADH + 5 H(+)(in) = a quinol + NAD(+) + 4 H(+)(out). Its function is as follows. NDH-1 shuttles electrons from NADH, via FMN and iron-sulfur (Fe-S) centers, to quinones in the respiratory chain. The immediate electron acceptor for the enzyme in this species is believed to be ubiquinone. Couples the redox reaction to proton translocation (for every two electrons transferred, four hydrogen ions are translocated across the cytoplasmic membrane), and thus conserves the redox energy in a proton gradient. This subunit may bind ubiquinone. The sequence is that of NADH-quinone oxidoreductase subunit H from Francisella tularensis subsp. mediasiatica (strain FSC147).